The sequence spans 148 residues: Azurin (148 aa).

Positions 1–18 are cleaved as a signal peptide; it reads MRNQLLFALAFIPTIAAA. Residues 19–148 enclose the Plastocyanin-like domain; it reads ASNCEVNVSA…MMRGTVKLVD (130 aa). Cysteine 22 and cysteine 45 are joined by a disulfide. Cu cation-binding residues include histidine 65, cysteine 131, histidine 136, and methionine 140.

Its subcellular location is the periplasm. The protein operates within one-carbon metabolism; methylamine degradation. Functionally, probable electron acceptor for methylamine dehydrogenase. In Methylobacillus flagellatus (strain ATCC 51484 / DSM 6875 / VKM B-1610 / KT), this protein is Azurin (azu).